A 175-amino-acid polypeptide reads, in one-letter code: Crossover junction endodeoxyribonuclease RuvC (175 aa).

Active-site residues include Asp16, Glu76, and Asp148. 3 residues coordinate Mg(2+): Asp16, Glu76, and Asp148.

Belongs to the RuvC family. In terms of assembly, homodimer which binds Holliday junction (HJ) DNA. The HJ becomes 2-fold symmetrical on binding to RuvC with unstacked arms; it has a different conformation from HJ DNA in complex with RuvA. In the full resolvosome a probable DNA-RuvA(4)-RuvB(12)-RuvC(2) complex forms which resolves the HJ. Mg(2+) is required as a cofactor.

The protein resides in the cytoplasm. The catalysed reaction is Endonucleolytic cleavage at a junction such as a reciprocal single-stranded crossover between two homologous DNA duplexes (Holliday junction).. Its function is as follows. The RuvA-RuvB-RuvC complex processes Holliday junction (HJ) DNA during genetic recombination and DNA repair. Endonuclease that resolves HJ intermediates. Cleaves cruciform DNA by making single-stranded nicks across the HJ at symmetrical positions within the homologous arms, yielding a 5'-phosphate and a 3'-hydroxyl group; requires a central core of homology in the junction. The consensus cleavage sequence is 5'-(A/T)TT(C/G)-3'. Cleavage occurs on the 3'-side of the TT dinucleotide at the point of strand exchange. HJ branch migration catalyzed by RuvA-RuvB allows RuvC to scan DNA until it finds its consensus sequence, where it cleaves and resolves the cruciform DNA. The polypeptide is Crossover junction endodeoxyribonuclease RuvC (Bradyrhizobium diazoefficiens (strain JCM 10833 / BCRC 13528 / IAM 13628 / NBRC 14792 / USDA 110)).